The primary structure comprises 212 residues: Large ribosomal subunit protein bL25 (212 aa).

Belongs to the bacterial ribosomal protein bL25 family. CTC subfamily. Part of the 50S ribosomal subunit; part of the 5S rRNA/L5/L18/L25 subcomplex. Contacts the 5S rRNA. Binds to the 5S rRNA independently of L5 and L18.

This is one of the proteins that binds to the 5S RNA in the ribosome where it forms part of the central protuberance. The sequence is that of Large ribosomal subunit protein bL25 from Leptospira interrogans serogroup Icterohaemorrhagiae serovar copenhageni (strain Fiocruz L1-130).